A 27-amino-acid chain; its full sequence is Superoxide dismutase [Mn] (27 aa).

The protein belongs to the iron/manganese superoxide dismutase family. Homodimer. Mn(2+) serves as cofactor.

The enzyme catalyses 2 superoxide + 2 H(+) = H2O2 + O2. Destroys superoxide anion radicals which are normally produced within the cells and which are toxic to biological systems. The chain is Superoxide dismutase [Mn] (sodA) from Desulfovibrio desulfuricans.